The chain runs to 356 residues: Glutamate 5-kinase (356 aa).

K6 is an ATP binding site. Substrate contacts are provided by S46, D135, and N147. ATP is bound at residue 202–208; sequence TGGMRSK. Residues 265–342 form the PUA domain; sequence KGIIVVDRGA…SEVRKLLNTT (78 aa).

It belongs to the glutamate 5-kinase family.

It localises to the cytoplasm. It carries out the reaction L-glutamate + ATP = L-glutamyl 5-phosphate + ADP. The protein operates within amino-acid biosynthesis; L-proline biosynthesis; L-glutamate 5-semialdehyde from L-glutamate: step 1/2. Its function is as follows. Catalyzes the transfer of a phosphate group to glutamate to form L-glutamate 5-phosphate. This Aquifex aeolicus (strain VF5) protein is Glutamate 5-kinase.